Here is a 151-residue protein sequence, read N- to C-terminus: UPF0208 membrane protein SG1605 (151 aa).

Helical transmembrane passes span 46–64 (FGVR…WQIA) and 70–90 (GPAV…LWWL).

The protein belongs to the UPF0208 family.

Its subcellular location is the cell inner membrane. This is UPF0208 membrane protein SG1605 from Sodalis glossinidius (strain morsitans).